The chain runs to 83 residues: U25-theraphotoxin-Cg1a (83 aa).

Positions 1–23 (MRFHTLLFLSFLLLVSCALICTA) are cleaved as a signal peptide. Residues 24-48 (QHPGLKKSGMFHENVGKGQHIEKKR) constitute a propeptide that is removed on maturation. 3 cysteine pairs are disulfide-bonded: C50–C66, C57–C71, and C65–C81.

This sequence belongs to the neurotoxin 07 (Beta/delta-agtx) family. 03 (aga-4) subfamily. JZTX sub-subfamily. Expressed by the venom gland.

The protein resides in the secreted. Inhibits TTX-sensitive sodium currents in rat dorsal root ganglion (DRG) neurons. The chain is U25-theraphotoxin-Cg1a from Chilobrachys guangxiensis (Chinese earth tiger tarantula).